Here is an 802-residue protein sequence, read N- to C-terminus: Outer membrane usher protein PefC (802 aa).

The N-terminal stretch at 1–24 is a signal peptide; the sequence is MSFHHRVFKLSALSLALFSHLSFA. C782 and C801 are oxidised to a cystine.

The protein belongs to the fimbrial export usher family.

The protein localises to the cell outer membrane. Involved in the export and assembly of FimA fimbrial subunits across the outer membrane. This Salmonella typhimurium (strain LT2 / SGSC1412 / ATCC 700720) protein is Outer membrane usher protein PefC (pefC).